The chain runs to 459 residues: Cysteine--tRNA ligase (459 aa).

Cys-28 is a Zn(2+) binding site. The short motif at 30 to 40 (VTIYDLCHIGH) is the 'HIGH' region element. Zn(2+)-binding residues include Cys-209, His-234, and Glu-238. A 'KMSKS' region motif is present at residues 266–270 (KMSKS). Lys-269 is a binding site for ATP.

Belongs to the class-I aminoacyl-tRNA synthetase family. Monomer. Requires Zn(2+) as cofactor.

Its subcellular location is the cytoplasm. The catalysed reaction is tRNA(Cys) + L-cysteine + ATP = L-cysteinyl-tRNA(Cys) + AMP + diphosphate. In Shewanella piezotolerans (strain WP3 / JCM 13877), this protein is Cysteine--tRNA ligase.